We begin with the raw amino-acid sequence, 188 residues long: Peptidyl-tRNA hydrolase (188 aa).

TRNA is bound at residue Tyr15. His20 acts as the Proton acceptor in catalysis. TRNA is bound by residues Phe66, Asn68, and Asn114.

It belongs to the PTH family. As to quaternary structure, monomer.

The protein localises to the cytoplasm. The enzyme catalyses an N-acyl-L-alpha-aminoacyl-tRNA + H2O = an N-acyl-L-amino acid + a tRNA + H(+). In terms of biological role, hydrolyzes ribosome-free peptidyl-tRNAs (with 1 or more amino acids incorporated), which drop off the ribosome during protein synthesis, or as a result of ribosome stalling. Catalyzes the release of premature peptidyl moieties from peptidyl-tRNA molecules trapped in stalled 50S ribosomal subunits, and thus maintains levels of free tRNAs and 50S ribosomes. The chain is Peptidyl-tRNA hydrolase from Lactococcus lactis subsp. cremoris (strain MG1363).